The chain runs to 413 residues: Enhanced ethylene response protein 5 (413 aa).

The PCI domain occupies 216–402 (VTYMYYTGRL…KVVVLSKQDP (187 aa)).

Interacts with EIN2 (via C-terminus). May also interact weakly with CSN8. Interacts with DSS1(V), AMPD, SAC3A, SAC3B and At5g61290 (AC Q9FLK4). Interacts with UCH1 and UCH2. Interacts with NUP1, anchoring the TREX-2 complex on the nuclear pore complex. In terms of tissue distribution, expressed at low levels in roots, leaves, stems and shoots. Detected in seedlings, roots, leaves and anthers.

Its subcellular location is the nucleus. In terms of biological role, involved in the regulation of ethylene response. Probable TREX-2 component required for nuclear RNA export. The TREX-2 complex (transcription and export complex 2) functions in docking export-competent ribonucleoprotein particles (mRNPs) to the nuclear entrance of the nuclear pore complex (nuclear basket). TREX-2 participates in mRNA export and accurate chromatin positioning in the nucleus by tethering genes to the nuclear periphery. This chain is Enhanced ethylene response protein 5, found in Arabidopsis thaliana (Mouse-ear cress).